The sequence spans 1286 residues: 5-oxoprolinase (1286 aa).

Phosphoserine occurs at positions 930 and 1077.

This sequence belongs to the oxoprolinase family. Homodimer.

Its subcellular location is the cytoplasm. It carries out the reaction 5-oxo-L-proline + ATP + 2 H2O = L-glutamate + ADP + phosphate + H(+). Its function is as follows. Catalyzes the cleavage of 5-oxo-L-proline to form L-glutamate coupled to the hydrolysis of ATP to ADP and inorganic phosphate. The chain is 5-oxoprolinase (OXP1) from Saccharomyces cerevisiae (strain ATCC 204508 / S288c) (Baker's yeast).